The following is a 369-amino-acid chain: Small ribosomal subunit biogenesis GTPase RsgA (369 aa).

The region spanning 116 to 271 is the CP-type G domain; sequence GEQLIAANLD…LIDNPGIREI (156 aa). Residues 161–164 and 213–221 contribute to the GTP site; these read NKID and GSSGVGKST. Zn(2+) is bound by residues C294, C299, H301, and C307.

The protein belongs to the TRAFAC class YlqF/YawG GTPase family. RsgA subfamily. In terms of assembly, monomer. Associates with 30S ribosomal subunit, binds 16S rRNA. The cofactor is Zn(2+).

It is found in the cytoplasm. Its function is as follows. One of several proteins that assist in the late maturation steps of the functional core of the 30S ribosomal subunit. Helps release RbfA from mature subunits. May play a role in the assembly of ribosomal proteins into the subunit. Circularly permuted GTPase that catalyzes slow GTP hydrolysis, GTPase activity is stimulated by the 30S ribosomal subunit. This Methanosarcina acetivorans (strain ATCC 35395 / DSM 2834 / JCM 12185 / C2A) protein is Small ribosomal subunit biogenesis GTPase RsgA.